We begin with the raw amino-acid sequence, 486 residues long: MLIFESSRPGRQARAQAPKPTAATNDLPERFLRQQPPALPEVSEMDVVRHYTGLSQKNFSIDTHFYPLGSCTMKYNPRACHTLASLPGFLERHPATPEAMSQGFLACLYELQDILAKMTGMQTMSLAPMAGAQGEFTGVAMIRAYHEARGDKERCEMLVPDAAHGTNPATATMCGFRVREIPTNPEGDVDLEALHKALGPQTAGIMLTNPSTLGIFDRNIQVIAQSVHKAGGLLYYDGANLNAILGKVKPGDMGFDVIHLNLHKTFSTPHGGGGPGSGPVGVGEKLLPFLPVPRVARAEGGSYRWLTAEDCPQTIGPLSAWMGNAGVLLRAYIYVRLLGLEGMKRVADFSALNANYLAQRMAEAGFDLAYPMRRAGHEFVVTLKRQAKELGVTATDFAKRLLDLGFHAPTIYFPLLVPECLLIEPAETESKQTLDAFVAAMEQIAKEAQENPELLKQAPHTLPARRLDEVKAAKELDLAWKPTPHE.

A disordered region spans residues 1–26 (MLIFESSRPGRQARAQAPKPTAATND). Lys-264 is subject to N6-(pyridoxal phosphate)lysine.

The protein belongs to the GcvP family. C-terminal subunit subfamily. The glycine cleavage system is composed of four proteins: P, T, L and H. In this organism, the P 'protein' is a heterodimer of two subunits. The cofactor is pyridoxal 5'-phosphate.

It catalyses the reaction N(6)-[(R)-lipoyl]-L-lysyl-[glycine-cleavage complex H protein] + glycine + H(+) = N(6)-[(R)-S(8)-aminomethyldihydrolipoyl]-L-lysyl-[glycine-cleavage complex H protein] + CO2. Functionally, the glycine cleavage system catalyzes the degradation of glycine. The P protein binds the alpha-amino group of glycine through its pyridoxal phosphate cofactor; CO(2) is released and the remaining methylamine moiety is then transferred to the lipoamide cofactor of the H protein. The protein is Probable glycine dehydrogenase (decarboxylating) subunit 2 of Nitrosococcus oceani (strain ATCC 19707 / BCRC 17464 / JCM 30415 / NCIMB 11848 / C-107).